The following is a 226-amino-acid chain: PKHD-type hydroxylase Nwi_0701 (226 aa).

Positions 78-178 (KVLPPRFNRY…RLAAFFWTQS (101 aa)) constitute a Fe2OG dioxygenase domain. Fe cation contacts are provided by His96, Asp98, and His159. 2-oxoglutarate is bound at residue Arg169.

The cofactor is Fe(2+). Requires L-ascorbate as cofactor.

This Nitrobacter winogradskyi (strain ATCC 25391 / DSM 10237 / CIP 104748 / NCIMB 11846 / Nb-255) protein is PKHD-type hydroxylase Nwi_0701.